We begin with the raw amino-acid sequence, 488 residues long: MKMMMMIILLLCSIILITILFFKKQSRGKKSNAPPSPPRLPLIRNLHQLGRHPHRSLCSLSHRYGPLMLLHFGSVPVLVVSSADAAKDVLKTHDRVFASRPRSKIFDKIFYNGRDVALAPYGEYWRQMKSVCVLHLFSNKMVRSFRDVRQEEISLMIEKIRISSSLRINLSEILVNLTNNVICRVALGRKYGGKTDFKDLMKRLTRLLGEFSVGSYVSWLAWIDWIRGLDGQLIKISNDLDEFLERVVQDHVDGDGHKNDFVDFLLTIEREKSVGFEIDRLSIKAIILDVFVGDMDTTYTLLEWAMTELLCHHECLDRLQEEVRMVCKDKSGVSEDDLQDMKYLKAVIKETLRLHPPLPLMVPHESTHDVKLRDYHIPAGTHVMINAWAIGREAATWGPDAEEFRPERHLNSYVDYRGQDTELVPFGAGRRICPAISFAVVLDEVVLANLVHQFDWTLPEESTEYQTDVAESTGMAVHRMFPLFAMTT.

Residues 3-23 (MMMMIILLLCSIILITILFFK) form a helical membrane-spanning segment. Heme is bound at residue Cys433.

Belongs to the cytochrome P450 family. Heme is required as a cofactor.

The protein localises to the membrane. The chain is Cytochrome P450 71A24 (CYP71A24) from Arabidopsis thaliana (Mouse-ear cress).